A 130-amino-acid chain; its full sequence is Small ribosomal subunit protein uS9 (130 aa).

Belongs to the universal ribosomal protein uS9 family.

The chain is Small ribosomal subunit protein uS9 from Shewanella pealeana (strain ATCC 700345 / ANG-SQ1).